The following is a 278-amino-acid chain: Dermonecrotic toxin LlSicTox-alphaIII3iii (278 aa).

Residue histidine 5 is part of the active site. The Mg(2+) site is built by glutamate 25 and aspartate 27. Histidine 40 acts as the Nucleophile in catalysis. Cysteine 44 and cysteine 50 are disulfide-bonded. Position 84 (aspartate 84) interacts with Mg(2+).

It belongs to the arthropod phospholipase D family. Class I subfamily. Mg(2+) serves as cofactor. As to expression, expressed by the venom gland.

It localises to the secreted. It catalyses the reaction an N-(acyl)-sphingosylphosphocholine = an N-(acyl)-sphingosyl-1,3-cyclic phosphate + choline. The enzyme catalyses an N-(acyl)-sphingosylphosphoethanolamine = an N-(acyl)-sphingosyl-1,3-cyclic phosphate + ethanolamine. The catalysed reaction is a 1-acyl-sn-glycero-3-phosphocholine = a 1-acyl-sn-glycero-2,3-cyclic phosphate + choline. It carries out the reaction a 1-acyl-sn-glycero-3-phosphoethanolamine = a 1-acyl-sn-glycero-2,3-cyclic phosphate + ethanolamine. Its function is as follows. Dermonecrotic toxins cleave the phosphodiester linkage between the phosphate and headgroup of certain phospholipids (sphingolipid and lysolipid substrates), forming an alcohol (often choline) and a cyclic phosphate. This toxin acts on sphingomyelin (SM). It may also act on ceramide phosphoethanolamine (CPE), lysophosphatidylcholine (LPC) and lysophosphatidylethanolamine (LPE), but not on lysophosphatidylserine (LPS), and lysophosphatidylglycerol (LPG). It acts by transphosphatidylation, releasing exclusively cyclic phosphate products as second products. Induces dermonecrosis, hemolysis, increased vascular permeability, edema, inflammatory response, and platelet aggregation. The sequence is that of Dermonecrotic toxin LlSicTox-alphaIII3iii from Loxosceles laeta (South American recluse spider).